The chain runs to 754 residues: Putative sulfate transporter YPR003C (754 aa).

The tract at residues 1–91 (MTSNNSLLGR…NTSNTNNNDS (91 aa)) is disordered. At 1 to 118 (MTSNNSLLGR…SWLPEYTFNK (118 aa)) the chain is on the cytoplasmic side. The segment covering 25–45 (RSVDQRDTFSDNFDYDKDSSN) has biased composition (basic and acidic residues). Residues 65–89 (NSRSGCTNNTNNTNNTSNTSNTNNN) show a composition bias toward low complexity. Residues 119–139 (LWGDVIAGISVASFQIPLALS) traverse the membrane as a helical segment. Residues 140-146 (YTTSIAH) lie on the Lumenal side of the membrane. The helical transmembrane segment at 147 to 167 (VPPLCGLYSLAISPFVYGILG) threads the bilayer. Residues 168-172 (SVPQM) are Cytoplasmic-facing. Residues 173–193 (IVGPESAISLVVGQAVESITL) form a helical membrane-spanning segment. Topologically, residues 194–199 (HKENVS) are lumenal. The helical transmembrane segment at 200–220 (LIDISTVITFVSGTILLFSGI) threads the bilayer. At 221–232 (SRFGFLGNVLSK) the chain is on the cytoplasmic side. The helical transmembrane segment at 233-253 (ALLRGFISSVGLVMIINSLIS) threads the bilayer. At 254 to 282 (ELKLDKFLVSLPQHYHTPFEKILFLIDYA) the chain is on the lumenal side. Residues 283–303 (PAQYHIPTAIFSGCCLIVLFL) form a helical membrane-spanning segment. At 304–317 (TRLLKRKLMKYHKS) the chain is on the cytoplasmic side. A helical transmembrane segment spans residues 318-338 (AIFFPDILLVVIVTILISMKF). The Lumenal portion of the chain corresponds to 339–370 (NLKHRYGISIIGDFSMDNFDELKNPLTRPRRK). The helical transmembrane segment at 371–391 (LIPDLFSASLIVAMLGFFEST) threads the bilayer. The Cytoplasmic portion of the chain corresponds to 392–410 (TASKSLGTTYNLTVSSNRE). The chain crosses the membrane as a helical span at residues 411 to 431 (LVALGFMNIVISLFGALPAFG). Residues 432–450 (GYGRSKINALSGAQSVMSG) lie on the Lumenal side of the membrane. A helical transmembrane segment spans residues 451–471 (VFMGVITLITMNLLLQFVHYI). At 472 to 474 (PNC) the chain is on the cytoplasmic side. Residues 475–495 (VLSVITTIIGISLLEEVPGDI) traverse the membrane as a helical segment. Topologically, residues 496–517 (KFHLRCGGFSELFVFAVTFCTT) are lumenal. Residues 518–538 (IFYSIEAGICIGCVYSIINII) traverse the membrane as a helical segment. The Cytoplasmic portion of the chain corresponds to 539–754 (KHSAKSRIQI…SNTLFNSSLV (216 aa)). The region spanning 574–725 (DVEGTEEIEG…DSIDAALYEI (152 aa)) is the STAS domain.

The protein belongs to the SLC26A/SulP transporter (TC 2.A.53) family.

It is found in the endoplasmic reticulum membrane. In terms of biological role, possible sulfate transporter. This is Putative sulfate transporter YPR003C from Saccharomyces cerevisiae (strain ATCC 204508 / S288c) (Baker's yeast).